Consider the following 648-residue polypeptide: Phosphatidylinositol polyphosphate 5-phosphatase type IV (648 aa).

Residues 1–64 (MPSKSACLRH…PLSMPAKPSN (64 aa)) form a disordered region. Polar residues predominate over residues 36–54 (TSASLPAADSQSSQTNSMP). Repeat copies occupy residues 59 to 62 (PAKP) and 76 to 79 (PQPP). The 4 X 4 AA repeats of P-X-X-P stretch occupies residues 59–243 (PAKPSNQNLQ…AHSNLGPSRP (185 aa)). Residues 99 to 158 (RFRGSQEDLTVQNGASPCRGSLQDSVAQSPAYSRPLPCLSTSLQEIPKPRRATGSEGGSP) form a disordered region. Serine 103 is modified (phosphoserine). Residues 120-129 (LQDSVAQSPA) are compositionally biased toward polar residues. Repeat unit 3 spans residues 147–150 (PRRA). Threonine 197 is subject to Phosphothreonine. Residues 240 to 243 (PSRP) form repeat 4. Phosphoserine is present on residues serine 245 and serine 260. Cysteine 645 is modified (cysteine methyl ester). Residue cysteine 645 is the site of S-farnesyl cysteine attachment. The propeptide at 646 to 648 (TVS) is removed in mature form.

The protein belongs to the inositol 1,4,5-trisphosphate 5-phosphatase type IV family. Interacts (when prenylated) with PDE6D; this is important for normal location in cilia.

It is found in the cytoplasm. The protein localises to the cytoskeleton. Its subcellular location is the cilium axoneme. It localises to the golgi apparatus. The protein resides in the golgi stack membrane. It is found in the cell membrane. The protein localises to the cell projection. Its subcellular location is the ruffle. It localises to the nucleus. The catalysed reaction is a 1,2-diacyl-sn-glycero-3-phospho-(1D-myo-inositol-4,5-bisphosphate) + H2O = a 1,2-diacyl-sn-glycero-3-phospho-(1D-myo-inositol 4-phosphate) + phosphate. It catalyses the reaction a 1,2-diacyl-sn-glycero-3-phospho-(1D-myo-inositol-3,4,5-trisphosphate) + H2O = a 1,2-diacyl-sn-glycero-3-phospho-(1D-myo-inositol-3,4-bisphosphate) + phosphate. It carries out the reaction a 1,2-diacyl-sn-glycero-3-phospho-(1D-myo-inositol-3,5-bisphosphate) + H2O = a 1,2-diacyl-sn-glycero-3-phospho-(1D-myo-inositol-3-phosphate) + phosphate. In terms of biological role, phosphatidylinositol (PtdIns) phosphatase that specifically hydrolyzes the 5-phosphate of phosphatidylinositol-3,4,5-trisphosphate (PtdIns(3,4,5)P3), phosphatidylinositol 4,5-bisphosphate PtdIns (4,5)P2 and phosphatidylinositol 3,5-bisphosphate (PtdIns(3,5)P2). Specific for lipid substrates, inactive towards water soluble inositol phosphates. Plays an essential role in the primary cilium by controlling ciliary growth and phosphoinositide 3-kinase (PI3K) signaling and stability. In Rattus norvegicus (Rat), this protein is Phosphatidylinositol polyphosphate 5-phosphatase type IV (Inpp5e).